The sequence spans 603 residues: Glutathione-regulated potassium-efflux system protein KefB (603 aa).

A run of 13 helical transmembrane segments spans residues 4–24, 29–49, 55–75, 87–107, 115–135, 152–172, 177–197, 207–227, 230–250, 268–288, 291–311, 324–344, and 355–375; these read SDFL…VPLA, IGAV…GLGF, EILH…GLEL, IFGV…GLLM, AAVV…LQLM, VLLF…LLAG, HFDW…LIGG, FIAA…LVLG, LFMD…GVLL, GLLL…GVLY, LLWV…VLYL, MQFA…FSTA, and MALL…PLLM. In terms of domain architecture, RCK N-terminal spans 402–521; sequence KPQVIVVGFG…AGVTQFSRET (120 aa).

Belongs to the monovalent cation:proton antiporter 2 (CPA2) transporter (TC 2.A.37) family. KefB subfamily. As to quaternary structure, interacts with the regulatory subunit KefG.

The protein resides in the cell inner membrane. Functionally, pore-forming subunit of a potassium efflux system that confers protection against electrophiles. Catalyzes K(+)/H(+) antiport. The chain is Glutathione-regulated potassium-efflux system protein KefB from Shigella boydii serotype 4 (strain Sb227).